The sequence spans 253 residues: Small ribosomal subunit protein uS3 (253 aa).

In terms of domain architecture, KH type-2 spans 38–106; that stretch reads IRKYIHARLS…EVQINIFEIK (69 aa). The tract at residues 216–253 is disordered; the sequence is AGMDKKQAGQGGGKGGDSPRGDRKPFNKGGKPDARKRK. The segment covering 232–253 has biased composition (basic and acidic residues); the sequence is DSPRGDRKPFNKGGKPDARKRK.

It belongs to the universal ribosomal protein uS3 family. In terms of assembly, part of the 30S ribosomal subunit. Forms a tight complex with proteins S10 and S14.

Its function is as follows. Binds the lower part of the 30S subunit head. Binds mRNA in the 70S ribosome, positioning it for translation. The protein is Small ribosomal subunit protein uS3 of Flavobacterium psychrophilum (strain ATCC 49511 / DSM 21280 / CIP 103535 / JIP02/86).